Here is a 697-residue protein sequence, read N- to C-terminus: MDVAYICEWDRRPRTSHCPSIPLVCAWSCRNLIAFTTDQRNEEEKDITNLIHILDTEHPWDVYSINSGHQEVITCLEWDQSGSRLLSADADGRIKCWGMTDHLANSWQNLVGSEVDGDPIVALSWLHNGVKLALHVEKSGVSSFGEKFSRVKFSPSLTLFGGKPMEGWIAVTVSGLVTVSLLKPNGQVLTATESLCRLRCRVALADIAFTGGGNIVVATCDGSSTSPVQFYKVCVSVVSEKCKIDTEILPSLFMRCTTDPARKDKFPAVTHLKFLARDMSEQVLLCASNQCSSIAECWSLRKEGLPLNNIFQQLSPAVSDKQPMILKWRILSATNELERVSAVALPKLPISLTNTDIKVASETKFYPGLGLALAFHDGNVQIVHRLSLQPMAVLYGSSLRPSEEPSLKRQRSPTPCIHFKALQMSWTSLALVGLDTQGKLSILRVSPSMGHSLDMSTSLRHLLFLLEYCMVTGYDWWDILLHVQPGMVHNLVEKLNEEYTRQNAALQQVLSTRILAMKASLCKLSQTTVTRVCDYHAKLFLISISCTLKSLLRPHVLNTPDKSPGDRLTEICNKFTDTDIDKVMINLKTEEFVLDMPTLQSLQQLIQWLGDFVLYLLVSLPNQGSSVRPGHSFLRDGASLGTLREMMVMIRIWGLLKPSCLPVYTATSDTQDSMSLLFRLLTRLWLCCPPHNQRLIT.

4 WD repeats span residues 68–107, 199–241, 264–308, and 622–663; these read GHQEVITCLEWDQSGSRLLSADADGRIKCWGMTDHLANSW, RCRV…VSEK, DKFP…LPLN, and NQGS…CLPV.

The protein belongs to the Mediator complex subunit 16 family. As to quaternary structure, component of the Mediator complex.

The protein resides in the nucleus. Its function is as follows. Component of the Mediator complex, a coactivator involved in the regulated transcription of nearly all RNA polymerase II-dependent genes. Mediator functions as a bridge to convey information from gene-specific regulatory proteins to the basal RNA polymerase II transcription machinery. Mediator is recruited to promoters by direct interactions with regulatory proteins and serves as a scaffold for the assembly of a functional preinitiation complex with RNA polymerase II and the general transcription factors. In Xenopus laevis (African clawed frog), this protein is Mediator of RNA polymerase II transcription subunit 16 (med16).